The sequence spans 153 residues: UPF0756 membrane protein Pjdr2_2290 (153 aa).

5 helical membrane passes run 6-26 (LILV…IATA), 50-70 (LELG…SGKV), 75-95 (LIAA…AVAA), 111-131 (MVVG…GIPV), and 132-152 (GPLM…LMSG).

This sequence belongs to the UPF0756 family.

It is found in the cell membrane. This Paenibacillus sp. (strain JDR-2) protein is UPF0756 membrane protein Pjdr2_2290.